The sequence spans 140 residues: Tumor protein D55 (140 aa).

The disordered stretch occupies residues 1 to 28 (MPHARTETSVGTYESHSTSELEDLTEPE). Over residues 7 to 18 (ETSVGTYESHST) the composition is skewed to polar residues. Residues 28-57 (EQRELKTKLTKLEAEIVTLRHVLAAKERRC) are a coiled coil.

The protein belongs to the TPD52 family. In terms of assembly, interacts with TPD52L2. In terms of tissue distribution, specifically expressed in testis. Expressed at 5.6-fold higher levels in adult testis than in fetal testis.

In Homo sapiens (Human), this protein is Tumor protein D55 (TPD52L3).